We begin with the raw amino-acid sequence, 352 residues long: MREMGEKRRRGHLNPAGFAGGLHDHEEKKNEEHKLDMSGMSMDALPHLTMSLGQVTILDLSNNNLESIPESIIARLLNVVVLDVRSNQLKSLPNSIGCLSKLKVLNVSGNLLESLPNTIEECRALEELHANFNELTKLPDTLGFELHSLRKLSVNSNKLAQLPSSTSHMTALRALDARLNCLRALPDGLENLANLEALNVSQNFQFLRELPYAVGLLASLRELDVSYNSIAALPDSMGCLTKLARFSAVGNPLVSPPMDVVEQGLDAMRAYLTARMNGGDGKRKKKAWLPKLVKYSTFTARMTPGRTRVHENTEGLLMSDYRSLNGIASPRFLTMLSPRRLFSPRRNSPKHC.

Positions Met1–His25 are disordered. 10 LRR repeats span residues Lys29–Leu52, Gly53–Arg75, Leu77–Leu99, Ser100–Cys122, Ala124–Leu146, His147–Met169, Ala171–Leu192, Leu195–Leu217, Ala218–Thr241, and Leu243–Gln263. The short motif at Gly264–Tyr271 is the GVYW; degenerate element.

Belongs to the SHOC2 family. Widely expressed but at a lower level in seedlings and stems.

Its function is as follows. Leucine-rich repeat protein that likely mediates protein interactions, possibly in the context of signal transduction. This Oryza sativa subsp. japonica (Rice) protein is Plant intracellular Ras-group-related LRR protein 1 (IRL1).